The chain runs to 537 residues: Bifunctional purine biosynthesis protein PurH (537 aa).

The 148-residue stretch at 11-158 (ADIQRVRRAL…KNHAYVGVIV (148 aa)) folds into the MGS-like domain.

It belongs to the PurH family.

The enzyme catalyses (6R)-10-formyltetrahydrofolate + 5-amino-1-(5-phospho-beta-D-ribosyl)imidazole-4-carboxamide = 5-formamido-1-(5-phospho-D-ribosyl)imidazole-4-carboxamide + (6S)-5,6,7,8-tetrahydrofolate. The catalysed reaction is IMP + H2O = 5-formamido-1-(5-phospho-D-ribosyl)imidazole-4-carboxamide. The protein operates within purine metabolism; IMP biosynthesis via de novo pathway; 5-formamido-1-(5-phospho-D-ribosyl)imidazole-4-carboxamide from 5-amino-1-(5-phospho-D-ribosyl)imidazole-4-carboxamide (10-formyl THF route): step 1/1. Its pathway is purine metabolism; IMP biosynthesis via de novo pathway; IMP from 5-formamido-1-(5-phospho-D-ribosyl)imidazole-4-carboxamide: step 1/1. The protein is Bifunctional purine biosynthesis protein PurH of Parvibaculum lavamentivorans (strain DS-1 / DSM 13023 / NCIMB 13966).